The chain runs to 143 residues: Nucleoside diphosphate kinase (143 aa).

Residues K11, F59, R87, T93, R104, and N114 each contribute to the ATP site. Residue H117 is the Pros-phosphohistidine intermediate of the active site.

It belongs to the NDK family. As to quaternary structure, homotetramer. Requires Mg(2+) as cofactor.

It localises to the cytoplasm. The catalysed reaction is a 2'-deoxyribonucleoside 5'-diphosphate + ATP = a 2'-deoxyribonucleoside 5'-triphosphate + ADP. The enzyme catalyses a ribonucleoside 5'-diphosphate + ATP = a ribonucleoside 5'-triphosphate + ADP. Major role in the synthesis of nucleoside triphosphates other than ATP. The ATP gamma phosphate is transferred to the NDP beta phosphate via a ping-pong mechanism, using a phosphorylated active-site intermediate. The sequence is that of Nucleoside diphosphate kinase from Shewanella baltica (strain OS223).